We begin with the raw amino-acid sequence, 901 residues long: Protein translocase subunit SecA (901 aa).

Residues glutamine 87, 105 to 109 (GEGKT), and aspartate 512 each bind ATP. The Zn(2+) site is built by cysteine 885, cysteine 887, cysteine 896, and histidine 897.

It belongs to the SecA family. In terms of assembly, monomer and homodimer. Part of the essential Sec protein translocation apparatus which comprises SecA, SecYEG and auxiliary proteins SecDF-YajC and YidC. Requires Zn(2+) as cofactor.

The protein resides in the cell inner membrane. It localises to the cytoplasm. The catalysed reaction is ATP + H2O + cellular proteinSide 1 = ADP + phosphate + cellular proteinSide 2.. Functionally, part of the Sec protein translocase complex. Interacts with the SecYEG preprotein conducting channel. Has a central role in coupling the hydrolysis of ATP to the transfer of proteins into and across the cell membrane, serving both as a receptor for the preprotein-SecB complex and as an ATP-driven molecular motor driving the stepwise translocation of polypeptide chains across the membrane. The protein is Protein translocase subunit SecA of Salmonella enteritidis PT4 (strain P125109).